Reading from the N-terminus, the 1009-residue chain is C2 domain-containing protein aex-1 (1009 aa).

A C2 domain is found at 812 to 945 (NAPHVDVHIS…ASEEKPTQRL (134 aa)).

Belongs to the unc-13 family. In terms of tissue distribution, expressed in intestine, body wall muscles and some amphid neurons.

Its function is as follows. Involved in retrograde signaling from post-synaptic cells to pre-synaptic neurons, probably by regulating vesicle exocytosis in post-synaptic cells. Acts in muscles, to regulate the localization of synaptic vesicle fusion protein unc-13 likely during vesicle exocytosis and thus regulate retrograde signaling at the neuromuscular junction (NMJ). Regulates anterior body muscle contractions (aBOC) and the expulsion steps during the defecation motor program (DMP). Probably by regulating DMP, plays a homeostatic role in the uptake of triglycerides. Regulates locomotion. This Caenorhabditis elegans protein is C2 domain-containing protein aex-1.